Consider the following 237-residue polypeptide: Uridylate kinase (237 aa).

An ATP-binding site is contributed by Lys-9 to Gly-12. The tract at residues Gly-17–Gly-22 is involved in allosteric activation by GTP. Gly-51 provides a ligand contact to UMP. 2 residues coordinate ATP: Gly-52 and Arg-56. Residues Asp-72 and Thr-133–Thr-140 contribute to the UMP site. Thr-160, Tyr-166, and Asp-169 together coordinate ATP.

It belongs to the UMP kinase family. Homohexamer.

It localises to the cytoplasm. It carries out the reaction UMP + ATP = UDP + ADP. It participates in pyrimidine metabolism; CTP biosynthesis via de novo pathway; UDP from UMP (UMPK route): step 1/1. With respect to regulation, allosterically activated by GTP. Inhibited by UTP. Functionally, catalyzes the reversible phosphorylation of UMP to UDP. This chain is Uridylate kinase, found in Sulfurimonas denitrificans (strain ATCC 33889 / DSM 1251) (Thiomicrospira denitrificans (strain ATCC 33889 / DSM 1251)).